The chain runs to 269 residues: Large ribosomal subunit protein uL3m (269 aa).

Residues 1 to 19 (MSKFLQGSIFSISKLHVRY) constitute a mitochondrion transit peptide.

Belongs to the universal ribosomal protein uL3 family. In terms of assembly, component of the mitochondrial large ribosomal subunit (mt-LSU). Mature yeast 74S mitochondrial ribosomes consist of a small (37S) and a large (54S) subunit. The 37S small subunit contains a 15S ribosomal RNA (15S mt-rRNA) and 34 different proteins. The 54S large subunit contains a 21S rRNA (21S mt-rRNA) and 46 different proteins.

The protein resides in the mitochondrion. Its function is as follows. Component of the mitochondrial ribosome (mitoribosome), a dedicated translation machinery responsible for the synthesis of mitochondrial genome-encoded proteins, including at least some of the essential transmembrane subunits of the mitochondrial respiratory chain. The mitoribosomes are attached to the mitochondrial inner membrane and translation products are cotranslationally integrated into the membrane. This chain is Large ribosomal subunit protein uL3m (MRPL9), found in Saccharomyces cerevisiae (strain ATCC 204508 / S288c) (Baker's yeast).